A 62-amino-acid polypeptide reads, in one-letter code: Photosystem II reaction center protein Z (62 aa).

The next 2 helical transmembrane spans lie at leucine 8–alanine 28 and tyrosine 41–isoleucine 61.

The protein belongs to the PsbZ family. PSII is composed of 1 copy each of membrane proteins PsbA, PsbB, PsbC, PsbD, PsbE, PsbF, PsbH, PsbI, PsbJ, PsbK, PsbL, PsbM, PsbT, sbX, PsbY, PsbZ, Psb30/Ycf12, at least 3 peripheral proteins of the oxygen-evolving complex and a large number of cofactors. It forms dimeric complexes.

It localises to the plastid. The protein localises to the chloroplast thylakoid membrane. Its function is as follows. May control the interaction of photosystem II (PSII) cores with the light-harvesting antenna, regulates electron flow through the 2 photosystem reaction centers. PSII is a light-driven water plastoquinone oxidoreductase, using light energy to abstract electrons from H(2)O, generating a proton gradient subsequently used for ATP formation. The protein is Photosystem II reaction center protein Z of Gracilaria tenuistipitata var. liui (Red alga).